The chain runs to 590 residues: V-type ATP synthase alpha chain (590 aa).

234–241 (GGFGAGKT) provides a ligand contact to ATP.

It belongs to the ATPase alpha/beta chains family.

It carries out the reaction ATP + H2O + 4 H(+)(in) = ADP + phosphate + 5 H(+)(out). Produces ATP from ADP in the presence of a proton gradient across the membrane. The V-type alpha chain is a catalytic subunit. The protein is V-type ATP synthase alpha chain of Halothermothrix orenii (strain H 168 / OCM 544 / DSM 9562).